The following is a 216-amino-acid chain: Heart- and neural crest derivatives-expressed protein 1 (216 aa).

3 disordered regions span residues 1–20, 53–109, and 165–203; these read MNLV…HPPH, APDF…RTES, and ELKK…KGRT. The span at 8 to 18 shows a compositional bias: basic residues; the sequence is AHHHHHHHSHP. Low complexity predominate over residues 65–78; it reads TAVAAAAYGPDARP. The segment covering 92–104 has biased composition (basic residues); the sequence is LPKRKGSGPKKER. A bHLH domain is found at 94–146; the sequence is KRKGSGPKKERRRTESINSAFAELRECIPNVPADTKLSKIKTLRLATSYIAYL. Position 107 is a phosphothreonine; by PLK4 (threonine 107). Residue serine 109 is modified to Phosphoserine; by PLK4. Residues 165–174 are compositionally biased toward basic and acidic residues; that stretch reads ELKKTDGGRE.

As to quaternary structure, efficient DNA binding requires dimerization with another bHLH protein. Forms homodimers and heterodimers with TCF3 gene products E12 and E47, HAND2 and HEY1, HEY2 and HEYL (hairy-related transcription factors). Interacts with MDFIC. Interacts with SOX15; the interaction enhances HAND1-induced differentiation of trophoblast giant cells. In terms of processing, phosphorylation by PLK4 disrupts the interaction with MDFIC and leads to translocation into the nucleoplasm, allowing dimerization and transcription factor activity. Smooth muscle cells of the gut and adrenal tissue.

The protein localises to the nucleus. The protein resides in the nucleoplasm. Its subcellular location is the nucleolus. Functionally, transcription factor that plays an essential role in both trophoblast giant cell differentiation and in cardiac morphogenesis. Binds the DNA sequence 5'-NRTCTG-3' (non-canonical E-box). Acts as a transcriptional repressor of SOX15. In the adult, could be required for ongoing expression of cardiac-specific genes. The polypeptide is Heart- and neural crest derivatives-expressed protein 1 (Hand1) (Mus musculus (Mouse)).